The following is a 275-amino-acid chain: MAIKTYKPYTPSRRFMTGLSSSDITSKPSVRSLLMKLPVTAGRNNNGRITSRHKEGGAKKLYRIIDFKRNKFNIEGTVSAIEYDPYRNCRIALVTYKDGEKRYIIQPTGLAVGDLVISAEGGLDIKTGYAMKLKNIPIGTIIHNIELHPGAGGQLARSAGASAQIMGREGKYTIIRMPSGEMRYILEECMATIGTVGNADFANISIGKAGRNRHRGIRPQTRGAAMNPVDHPHGGGEGKTGSSGHPVSPWGMPAKGFKTRKKKASDKLIISRRKK.

Residues 220-275 form a disordered region; it reads QTRGAAMNPVDHPHGGGEGKTGSSGHPVSPWGMPAKGFKTRKKKASDKLIISRRKK. Residues 257–275 are compositionally biased toward basic residues; it reads FKTRKKKASDKLIISRRKK.

Belongs to the universal ribosomal protein uL2 family. Part of the 50S ribosomal subunit. Forms a bridge to the 30S subunit in the 70S ribosome.

One of the primary rRNA binding proteins. Required for association of the 30S and 50S subunits to form the 70S ribosome, for tRNA binding and peptide bond formation. It has been suggested to have peptidyltransferase activity; this is somewhat controversial. Makes several contacts with the 16S rRNA in the 70S ribosome. In Wolinella succinogenes (strain ATCC 29543 / DSM 1740 / CCUG 13145 / JCM 31913 / LMG 7466 / NCTC 11488 / FDC 602W) (Vibrio succinogenes), this protein is Large ribosomal subunit protein uL2.